The chain runs to 452 residues: UDP-N-acetylmuramoylalanine--D-glutamate ligase (452 aa).

115 to 121 lines the ATP pocket; sequence GTNGKTT.

It belongs to the MurCDEF family.

Its subcellular location is the cytoplasm. The enzyme catalyses UDP-N-acetyl-alpha-D-muramoyl-L-alanine + D-glutamate + ATP = UDP-N-acetyl-alpha-D-muramoyl-L-alanyl-D-glutamate + ADP + phosphate + H(+). It functions in the pathway cell wall biogenesis; peptidoglycan biosynthesis. Cell wall formation. Catalyzes the addition of glutamate to the nucleotide precursor UDP-N-acetylmuramoyl-L-alanine (UMA). In Geobacter metallireducens (strain ATCC 53774 / DSM 7210 / GS-15), this protein is UDP-N-acetylmuramoylalanine--D-glutamate ligase.